The chain runs to 760 residues: Alpha-amylase (760 aa).

A signal peptide spans 1 to 34 (MSKRSKLLKRRMLSLSVICVLIGYGPVFNPVRSQ). Positions 143, 184, and 192 each coordinate Ca(2+). Asp222 acts as the Nucleophile in catalysis. Position 226 (His226) interacts with Ca(2+). Glu262 (proton donor) is an active-site residue.

The protein belongs to the glycosyl hydrolase 13 family. As to quaternary structure, monomer. Requires Ca(2+) as cofactor.

The catalysed reaction is Endohydrolysis of (1-&gt;4)-alpha-D-glucosidic linkages in polysaccharides containing three or more (1-&gt;4)-alpha-linked D-glucose units.. This is Alpha-amylase (amyA) from Clostridium acetobutylicum (strain ATCC 824 / DSM 792 / JCM 1419 / IAM 19013 / LMG 5710 / NBRC 13948 / NRRL B-527 / VKM B-1787 / 2291 / W).